Consider the following 435-residue polypeptide: Putative F-box/FBD/LRR-repeat protein At5g56810 (435 aa).

The F-box domain maps to Pro-14–Asn-62. LRR repeat units follow at residues Cys-64–Leu-95, Leu-146–Cys-173, Val-174–Arg-199, Lys-222–Asp-248, Ser-266–Leu-291, and Tyr-316–His-341. The FBD domain occupies Cys-353 to Leu-404.

This Arabidopsis thaliana (Mouse-ear cress) protein is Putative F-box/FBD/LRR-repeat protein At5g56810.